Consider the following 126-residue polypeptide: Large ribosomal subunit protein bL17c (126 aa).

The N-terminal 10 residues, 1–10, are a transit peptide targeting the chloroplast; sequence MIDNGGRFFA.

As to quaternary structure, component of the chloroplast large ribosomal subunit (LSU). Mature 70S chloroplast ribosomes of higher plants consist of a small (30S) and a large (50S) subunit. The 30S small subunit contains 1 molecule of ribosomal RNA (16S rRNA) and 24 different proteins. The 50S large subunit contains 3 rRNA molecules (23S, 5S and 4.5S rRNA) and 33 different proteins.

It localises to the plastid. The protein localises to the chloroplast. Component of the chloroplast ribosome (chloro-ribosome), a dedicated translation machinery responsible for the synthesis of chloroplast genome-encoded proteins, including proteins of the transcription and translation machinery and components of the photosynthetic apparatus. The sequence is that of Large ribosomal subunit protein bL17c (RPL17) from Spinacia oleracea (Spinach).